The primary structure comprises 451 residues: NADH-quinone oxidoreductase subunit H (451 aa).

Transmembrane regions (helical) follow at residues 30–50 (LIIV…LFMI), 98–118 (AVFI…FAVI), 138–158 (LPVA…GIVL), 176–196 (AAQV…VFLY), 213–233 (WGIL…VGET), 262–282 (LFYL…TTLF), 302–322 (WWPV…FIWL), 336–356 (QFGW…EAAI), and 368–388 (VIPF…ADLV).

This sequence belongs to the complex I subunit 1 family. In terms of assembly, NDH-1 is composed of 14 different subunits. Subunits NuoA, H, J, K, L, M, N constitute the membrane sector of the complex.

It is found in the cell membrane. It catalyses the reaction a quinone + NADH + 5 H(+)(in) = a quinol + NAD(+) + 4 H(+)(out). In terms of biological role, NDH-1 shuttles electrons from NADH, via FMN and iron-sulfur (Fe-S) centers, to quinones in the respiratory chain. The immediate electron acceptor for the enzyme in this species is believed to be ubiquinone. Couples the redox reaction to proton translocation (for every two electrons transferred, four hydrogen ions are translocated across the cytoplasmic membrane), and thus conserves the redox energy in a proton gradient. This subunit may bind ubiquinone. In Acidothermus cellulolyticus (strain ATCC 43068 / DSM 8971 / 11B), this protein is NADH-quinone oxidoreductase subunit H.